The following is a 306-amino-acid chain: Pyridoxal 5'-phosphate synthase subunit PdxS (306 aa).

D-ribose 5-phosphate is bound at residue Asp36. The active-site Schiff-base intermediate with D-ribose 5-phosphate is Lys93. Gly165 provides a ligand contact to D-ribose 5-phosphate. Residue Arg177 coordinates D-glyceraldehyde 3-phosphate. D-ribose 5-phosphate contacts are provided by residues Gly226 and 247 to 248 (GS).

This sequence belongs to the PdxS/SNZ family. As to quaternary structure, in the presence of PdxT, forms a dodecamer of heterodimers.

It carries out the reaction aldehydo-D-ribose 5-phosphate + D-glyceraldehyde 3-phosphate + L-glutamine = pyridoxal 5'-phosphate + L-glutamate + phosphate + 3 H2O + H(+). The protein operates within cofactor biosynthesis; pyridoxal 5'-phosphate biosynthesis. Its function is as follows. Catalyzes the formation of pyridoxal 5'-phosphate from ribose 5-phosphate (RBP), glyceraldehyde 3-phosphate (G3P) and ammonia. The ammonia is provided by the PdxT subunit. Can also use ribulose 5-phosphate and dihydroxyacetone phosphate as substrates, resulting from enzyme-catalyzed isomerization of RBP and G3P, respectively. This chain is Pyridoxal 5'-phosphate synthase subunit PdxS, found in Nocardia farcinica (strain IFM 10152).